Reading from the N-terminus, the 168-residue chain is Mitochondrial import inner membrane translocase subunit TIM14 (168 aa).

The span at 1–12 (MSSQSNTGNSIE) shows a compositional bias: polar residues. A disordered region spans residues 1 to 29 (MSSQSNTGNSIEAPQLPIPGQTNGSANVT). Over 1 to 65 (MSSQSNTGNS…QALNYMGEHP (65 aa)) the chain is Mitochondrial intermembrane. A helical transmembrane segment spans residues 66-83 (VITGFGAFLTLYFTAGAY). Residues 84-168 (KSISKGLNGG…DFLEKRGISK (85 aa)) lie on the Mitochondrial matrix side of the membrane. The J domain maps to 112-168 (EALQILNLTENTLTKKKLKEVHRKIMLANHPDKGGSPFLATKINEAKDFLEKRGISK).

The protein belongs to the TIM14 family. In terms of assembly, homodimer and heterodimer with PAM16/TIM16. Homodimerization may not be relevant in vivo, while heterodimerization is essential for activity regulation of mtHSP70. Component of the PAM complex, at least composed of mtHsp70, MGE1, TIM44, PAM16, PAM17 and PAM18/TIM14. Interacts directly with mtHsp70. Interacts directly with TIM17 subunit of the TIM23 complex.

The protein resides in the mitochondrion inner membrane. Functionally, essential component of the PAM complex, a complex required for the translocation of transit peptide-containing proteins from the inner membrane into the mitochondrial matrix in an ATP-dependent manner. In the complex, it is required to stimulate activity of mtHSP70 (SSC1). The protein is Mitochondrial import inner membrane translocase subunit TIM14 (PAM18) of Saccharomyces cerevisiae (strain ATCC 204508 / S288c) (Baker's yeast).